The following is a 260-amino-acid chain: Thymidylate synthase (260 aa).

It participates in pyrimidine metabolism; dTTP biosynthesis. Its function is as follows. Is able to catalyze the biosynthesis of dTMP using dUMP, tetrahydrofolate and formaldehyde in vitro, i.e. a reaction equivalent to that catalyzed by bacterial thymidylate synthases (EC 2.1.1.45). However, M.jannaschii like most methanogenic Archaea lacks folates, thus the physiological cosubstrate is unknown but is likely one of the non-methylated methanopterin biosynthetic intermediates. The chain is Thymidylate synthase from Methanocaldococcus jannaschii (strain ATCC 43067 / DSM 2661 / JAL-1 / JCM 10045 / NBRC 100440) (Methanococcus jannaschii).